The sequence spans 345 residues: Dihydroorotase (345 aa).

Zn(2+)-binding residues include histidine 13 and histidine 15. Substrate contacts are provided by residues histidine 15 to arginine 17 and asparagine 41. Zn(2+)-binding residues include lysine 99, histidine 136, and histidine 174. Lysine 99 carries the N6-carboxylysine modification. Residue histidine 136 coordinates substrate. Leucine 219 provides a ligand contact to substrate. Aspartate 247 lines the Zn(2+) pocket. Aspartate 247 is an active-site residue. Substrate is bound by residues histidine 251 and alanine 263.

This sequence belongs to the metallo-dependent hydrolases superfamily. DHOase family. Class II DHOase subfamily. As to quaternary structure, homodimer. The cofactor is Zn(2+).

The enzyme catalyses (S)-dihydroorotate + H2O = N-carbamoyl-L-aspartate + H(+). It participates in pyrimidine metabolism; UMP biosynthesis via de novo pathway; (S)-dihydroorotate from bicarbonate: step 3/3. In terms of biological role, catalyzes the reversible cyclization of carbamoyl aspartate to dihydroorotate. In Acaryochloris marina (strain MBIC 11017), this protein is Dihydroorotase.